Reading from the N-terminus, the 625-residue chain is Chaperone protein HtpG (625 aa).

Residues 1–330 (MAKQVQNFNA…SSDLSLNVSR (330 aa)) form an a; substrate-binding region. The tract at residues 331-545 (ELLQQDRQVT…SADPSAHMQK (215 aa)) is b. The segment at 546–625 (LMAQMGKEYA…MVQAADSTKH (80 aa)) is c.

This sequence belongs to the heat shock protein 90 family. In terms of assembly, homodimer.

It is found in the cytoplasm. Functionally, molecular chaperone. Has ATPase activity. This is Chaperone protein HtpG from Bdellovibrio bacteriovorus (strain ATCC 15356 / DSM 50701 / NCIMB 9529 / HD100).